The sequence spans 71 residues: Alpha-cobratoxin (71 aa).

5 disulfide bridges follow: cysteine 3–cysteine 20, cysteine 14–cysteine 41, cysteine 26–cysteine 30, cysteine 45–cysteine 56, and cysteine 57–cysteine 62.

This sequence belongs to the three-finger toxin family. Long-chain subfamily. Type II alpha-neurotoxin sub-subfamily. As to quaternary structure, monomer, homo- or heterodimer with cytotoxins 1 (P60305), 2 (AC P01445), and 3 (AC P01446); disulfide-linked. In homodimer alpha-cobratoxin, selective reduction of Cys(26)-Cys(30) in one subunit does not affect the activity against the alpha-7/CHRNA7 nAChR, whereas its reduction in both subunits almost prevents alpha-7/CHRNA7 nAChR recognition. On the contrary, reduction of one or both Cys(26)-Cys(30) disulfide bonds in the homodimer considerably potentiates inhibition of the alpha-3-beta-2/CHRNA3-CHRNB2 nAChR by the toxin. As to expression, expressed by the venom gland.

Its subcellular location is the secreted. Monomer: binds with high affinity to muscular (alpha-1-beta-1-gamma-delta/CHRNA1-CHRNB1-CHRNG-CHRND) nAChR (tested on Torpedo californica, Kd=0.2-4.5 nM) and neuronal alpha-7/CHRNA7 nicotinic acetylcholine receptors (Kd=13-105 nM). Also inhibits GABA(A) channels. Heteropentamer targets studied are composed of alpha-1-beta-3-gamma-2 (GABRA1-GABRB3-GABRG2) subunits (IC(50)=236 nM), alpha-1-beta-2-gamma-2 (GABRA1-GABRB2-GABRG2) subunits (IC(50)=469 nM), alpha-2-beta-2-gamma-2 (GABRA2-GABRB2-GABRG2) subunits (IC(50)=485 nM), alpha-5-beta-3-gamma-2 (GABRA5-GABRB3-GABRG2) subunits (IC(50)=635 nM), and alpha-2-beta-3-gamma-2 (GABRA2-GABRB3-GABRG2) subunits (IC(50)=1099 nM) (activated by 10 uM GABA). Its function is as follows. Homodimer: binds with high affinity (but lower than the monomeric form) to muscular (IC(50)=9.7 nM) and with low affinity to neuronal alpha-7/CHRNA7 nAChRs (IC(50)=1370 nM). However, it acquires (compared to the monomeric form) the capacity to block alpha-3/beta-2 (CHRNA3/CHRNB2) nAChRs. In terms of biological role, heterodimer with cytotoxin 3 (AC P01446): is slightly more active than the homodimer in inhibiting alpha-7/CHRNA7 nAChR and is considerably more active in blocking the alpha-3-beta-2/CHRNA3-CHRNB2 nAChR. The polypeptide is Alpha-cobratoxin (Naja kaouthia (Monocled cobra)).